Consider the following 159-residue polypeptide: Small ribosomal subunit protein uS7c (159 aa).

The protein belongs to the universal ribosomal protein uS7 family. As to quaternary structure, part of the 30S ribosomal subunit.

The protein localises to the plastid. The protein resides in the chloroplast. Its function is as follows. One of the primary rRNA binding proteins, it binds directly to 16S rRNA where it nucleates assembly of the head domain of the 30S subunit. The sequence is that of Small ribosomal subunit protein uS7c (rps7) from Bigelowiella natans (Pedinomonas minutissima).